Consider the following 185-residue polypeptide: Anterior gradient protein 2 (185 aa).

The first 18 residues, 1 to 18, serve as a signal peptide directing secretion; sequence MQTGLSLACLVLLCSVLG. Residues 25 to 45 form a disordered region; the sequence is PKRQAGATDTNGAAKSEPAPV.

The protein belongs to the AGR family. In terms of tissue distribution, expressed in the anterior of the dorsal ectoderm from late gastrula stages onwards. Becomes restricted to the cement gland anlage at the onset of neurulation (stages 13 to 14) and expressed exclusively in the cement gland from stage 18 onwards, with transient expression in the hatching gland during tailbud stages.

The protein localises to the secreted. In terms of biological role, involved in cement gland formation; probably specifies dorsal ectoderm to acquire an anterior fate such as cement gland and forebrain. Signals via the FGF pathway. This Xenopus laevis (African clawed frog) protein is Anterior gradient protein 2 (ag2).